We begin with the raw amino-acid sequence, 377 residues long: Homoserine O-acetyltransferase (377 aa).

The 309-residue stretch at 47–355 (NAILICHALT…DYGHDAFLLE (309 aa)) folds into the AB hydrolase-1 domain. The active-site Nucleophile is the S153. Position 222 (R222) interacts with substrate. Residues D316 and H349 contribute to the active site. Position 350 (D350) interacts with substrate.

It belongs to the AB hydrolase superfamily. MetX family. As to quaternary structure, homodimer.

The protein localises to the cytoplasm. The catalysed reaction is L-homoserine + acetyl-CoA = O-acetyl-L-homoserine + CoA. Its pathway is amino-acid biosynthesis; L-methionine biosynthesis via de novo pathway; O-acetyl-L-homoserine from L-homoserine: step 1/1. Its function is as follows. Transfers an acetyl group from acetyl-CoA to L-homoserine, forming acetyl-L-homoserine. The polypeptide is Homoserine O-acetyltransferase (Deferribacter desulfuricans (strain DSM 14783 / JCM 11476 / NBRC 101012 / SSM1)).